The chain runs to 206 residues: Sclerostin domain-containing protein 1 (206 aa).

The signal sequence occupies residues 1 to 23; the sequence is MLPPAIHFYLLPLACILMKSCLA. Asn-47 carries N-linked (GlcNAc...) asparagine glycosylation. Disulfide bonds link Cys-75/Cys-133, Cys-89/Cys-147, Cys-100/Cys-163, and Cys-104/Cys-165. The region spanning 75–170 is the CTCK domain; it reads CRELRSTKYI…TACKCKRYTR (96 aa). Residue Asn-173 is glycosylated (N-linked (GlcNAc...) asparagine). Residues 176 to 206 are disordered; the sequence is SHNFESMSPAKPVQHHRERKRASKSSKHSMS. Basic residues predominate over residues 188–206; the sequence is VQHHRERKRASKSSKHSMS.

It belongs to the sclerostin family. Interacts with BMP2, BMP4, BMP6 and BMP7 with high affinity.

It is found in the secreted. In terms of biological role, directly antagonizes activity of BMP2, BMP4, BMP6 and BMP7 in a dose-dependent manner. Enhances Wnt signaling and inhibits TGF-beta signaling. May be involved in the onset of endometrial receptivity for implantation/sensitization for the decidual cell reaction. This chain is Sclerostin domain-containing protein 1 (SOSTDC1), found in Pongo abelii (Sumatran orangutan).